A 611-amino-acid polypeptide reads, in one-letter code: Urease subunit alpha 2 (611 aa).

The 458-residue stretch at 154 to 611 (GGIDSHIHFI…LPMAQRYFLF (458 aa)) folds into the Urease domain. Ni(2+) contacts are provided by His-159, His-161, and Lys-242. Lys-242 carries the post-translational modification N6-carboxylysine. Residue His-244 participates in substrate binding. 2 residues coordinate Ni(2+): His-271 and His-297. Residue His-345 is the Proton donor of the active site. Asp-385 contacts Ni(2+). Residues 411–434 (GHLAPDQSAKTEQSLDNIMLSPTD) form a disordered region. Residues 418 to 434 (SAKTEQSLDNIMLSPTD) show a composition bias toward polar residues.

It belongs to the metallo-dependent hydrolases superfamily. Urease alpha subunit family. As to quaternary structure, heterotrimer of UreA (gamma), UreB (beta) and UreC (alpha) subunits. Three heterotrimers associate to form the active enzyme. It depends on Ni cation as a cofactor. In terms of processing, carboxylation allows a single lysine to coordinate two nickel ions.

Its subcellular location is the cytoplasm. The enzyme catalyses urea + 2 H2O + H(+) = hydrogencarbonate + 2 NH4(+). Its pathway is nitrogen metabolism; urea degradation; CO(2) and NH(3) from urea (urease route): step 1/1. The polypeptide is Urease subunit alpha 2 (Psychrobacter cryohalolentis (strain ATCC BAA-1226 / DSM 17306 / VKM B-2378 / K5)).